Reading from the N-terminus, the 239-residue chain is Dephospho-CoA kinase (239 aa).

Positions 3-206 (IIGLTGSIAS…GGEGGEPAAG (204 aa)) constitute a DPCK domain. 11–16 (ASGKST) provides a ligand contact to ATP. The tract at residues 197 to 239 (GGEGGEPAAGSSAHHGAGSVDPGAGPCDGPGAAPEAERRGGDR) is disordered. Residues 204-230 (AAGSSAHHGAGSVDPGAGPCDGPGAAP) are compositionally biased toward low complexity.

Belongs to the CoaE family.

Its subcellular location is the cytoplasm. It catalyses the reaction 3'-dephospho-CoA + ATP = ADP + CoA + H(+). Its pathway is cofactor biosynthesis; coenzyme A biosynthesis; CoA from (R)-pantothenate: step 5/5. In terms of biological role, catalyzes the phosphorylation of the 3'-hydroxyl group of dephosphocoenzyme A to form coenzyme A. This Symbiobacterium thermophilum (strain DSM 24528 / JCM 14929 / IAM 14863 / T) protein is Dephospho-CoA kinase.